We begin with the raw amino-acid sequence, 314 residues long: Protein ATP1B4 (314 aa).

Residues 1–17 (MATTAGEQANYLQSADS) are compositionally biased toward polar residues. Positions 1–37 (MATTAGEQANYLQSADSMSDGRQHHPEEAGEKKQEEQ) are disordered. The Cytoplasmic segment spans residues 1–69 (MATTAGEQAN…VLGRDKKSWA (69 aa)). Positions 19–37 (SDGRQHHPEEAGEKKQEEQ) are enriched in basic and acidic residues. The chain crosses the membrane as a helical span at residues 70-90 (LILLFYFILYCFLAGLFALCI). Residues 91-314 (YGLLATISPY…GRVAFTLHIG (224 aa)) are Extracellular-facing. An intrachain disulfide couples cysteine 160 to cysteine 179. Residue asparagine 188 is glycosylated (N-linked (GlcNAc...) asparagine). 2 cysteine pairs are disulfide-bonded: cysteine 189/cysteine 205 and cysteine 228/cysteine 287. N-linked (GlcNAc...) asparagine glycosylation occurs at asparagine 264.

The protein belongs to the X(+)/potassium ATPases subunit beta family. As to quaternary structure, composed of two subunits: alpha (catalytic) and beta (accessory). In terms of processing, glycosylated. Expressed in skeletal muscle, liver, lung, kidney, heart, brain and skin.

Its subcellular location is the membrane. Functionally, this is the non-catalytic component of the active enzyme, which catalyzes the hydrolysis of ATP coupled with the exchange of Na(+) and K(+) ions across the plasma membrane. In Xenopus laevis (African clawed frog), this protein is Protein ATP1B4 (atp1b4).